Consider the following 789-residue polypeptide: Glycerol-3-phosphate acyltransferase (789 aa).

An HXXXXD motif motif is present at residues 276-281 (HRSYID).

The protein belongs to the GPAT/DAPAT family.

It is found in the cell membrane. It catalyses the reaction sn-glycerol 3-phosphate + an acyl-CoA = a 1-acyl-sn-glycero-3-phosphate + CoA. It functions in the pathway phospholipid metabolism; CDP-diacylglycerol biosynthesis; CDP-diacylglycerol from sn-glycerol 3-phosphate: step 1/3. The sequence is that of Glycerol-3-phosphate acyltransferase (plsB) from Mycobacterium tuberculosis (strain CDC 1551 / Oshkosh).